The primary structure comprises 935 residues: Isoleucine--tRNA ligase (935 aa).

Positions 58-68 match the 'HIGH' region motif; sequence PYANGSIHVGH. An L-isoleucyl-5'-AMP-binding site is contributed by Glu558. Positions 599–603 match the 'KMSKS' region motif; the sequence is KMSKS. An ATP-binding site is contributed by Lys602. Zn(2+) is bound by residues Cys897, Cys900, Cys917, and Cys920.

Belongs to the class-I aminoacyl-tRNA synthetase family. IleS type 1 subfamily. As to quaternary structure, monomer. Zn(2+) is required as a cofactor.

It localises to the cytoplasm. The catalysed reaction is tRNA(Ile) + L-isoleucine + ATP = L-isoleucyl-tRNA(Ile) + AMP + diphosphate. Its function is as follows. Catalyzes the attachment of isoleucine to tRNA(Ile). As IleRS can inadvertently accommodate and process structurally similar amino acids such as valine, to avoid such errors it has two additional distinct tRNA(Ile)-dependent editing activities. One activity is designated as 'pretransfer' editing and involves the hydrolysis of activated Val-AMP. The other activity is designated 'posttransfer' editing and involves deacylation of mischarged Val-tRNA(Ile). This chain is Isoleucine--tRNA ligase, found in Francisella tularensis subsp. mediasiatica (strain FSC147).